Consider the following 130-residue polypeptide: Small ribosomal subunit protein uS8 (130 aa).

The protein belongs to the universal ribosomal protein uS8 family. Part of the 30S ribosomal subunit.

In terms of biological role, one of the primary rRNA binding proteins, it binds directly to 16S rRNA central domain where it helps coordinate assembly of the platform of the 30S subunit. The chain is Small ribosomal subunit protein uS8 from Cenarchaeum symbiosum (strain A).